The primary structure comprises 306 residues: MTNKPAKRPVNGVLLLDKPEGLSSNTALQKARRLFHAEKAGHTGVLDPLATGLLPVCFGEAAKFAQYLLDADKAYTATLKLGEASSTGDAEGEIIAAARADISLAEFQTACQALTGNIRQVPPMFSALKHEGKPLYEYARKGIVIERKPRDITVYSIDIAEFDAPKAVISVRCSKGTYIRTLSEGIAKHIGTFAHLTALRRTETAGFTIAQSHTLEALANLDETERDNLLLPCDVLVSHFPQTVLNDYAVHMLQCGQRPRFEEDLPSDTPVRVYTENGRFVGLAEYQKEICRMKALRLMNTAASSA.

D47 acts as the Nucleophile in catalysis.

Belongs to the pseudouridine synthase TruB family. Type 1 subfamily.

The catalysed reaction is uridine(55) in tRNA = pseudouridine(55) in tRNA. Functionally, responsible for synthesis of pseudouridine from uracil-55 in the psi GC loop of transfer RNAs. This Neisseria gonorrhoeae (strain NCCP11945) protein is tRNA pseudouridine synthase B.